A 132-amino-acid polypeptide reads, in one-letter code: Large ribosomal subunit protein bL12 (132 aa).

Basic and acidic residues predominate over residues 102 to 126; that stretch reads APKPIKEATNKDDAESIKKQLEEAG. Residues 102–132 form a disordered region; the sequence is APKPIKEATNKDDAESIKKQLEEAGAKASVK.

Belongs to the bacterial ribosomal protein bL12 family. As to quaternary structure, homodimer. Part of the ribosomal stalk of the 50S ribosomal subunit. Forms a multimeric L10(L12)X complex, where L10 forms an elongated spine to which 2 to 4 L12 dimers bind in a sequential fashion. Binds GTP-bound translation factors.

Functionally, forms part of the ribosomal stalk which helps the ribosome interact with GTP-bound translation factors. Is thus essential for accurate translation. This Rippkaea orientalis (strain PCC 8801 / RF-1) (Cyanothece sp. (strain PCC 8801)) protein is Large ribosomal subunit protein bL12.